The following is a 388-amino-acid chain: AT-rich binding protein (388 aa).

The C2H2-type 1 zinc finger occupies 29 to 52 (IVCHTCQEELQTQDQFWKHIQDEH). 2 stretches are compositionally biased toward low complexity: residues 138–165 (QQHQQSQQQGHQQHQVQQQQTHQQLQQQ) and 249–265 (VSVSASTSTSNTVSTTP). 2 disordered regions span residues 138 to 168 (QQHQQSQQQGHQQHQVQQQQTHQQLQQQRDV) and 240 to 265 (PPPPPGSGFVSVSASTSTSNTVSTTP). C2H2-type zinc fingers lie at residues 321 to 345 (YVCDYETCGLKFKYKSRMELHRVVH) and 351 to 374 (FNCELCSASFKQSCNLSTHRKKKH).

It localises to the nucleus. In terms of biological role, may be a transcription factor for genes having (A+T) stretches in their promoter and/or enhancer regions. Binds to AT rich DNA. The protein is AT-rich binding protein of Drosophila melanogaster (Fruit fly).